The sequence spans 308 residues: Protein translocase subunit SecF (308 aa).

6 consecutive transmembrane segments (helical) span residues 14-34 (FFLLSGAITVAGVIVFALFGF), 134-154 (VYAVLAAAACIVVYIAIRFEF), 158-178 (ISGIIALLHDAFIVLAAFALL), 185-205 (TFVAALLTIVGYSINDTIVIF), 238-258 (SIRTVLTVLIAAVILYFFGGI), and 267-287 (LIIGLVSGAYSSIFIASPIWV).

Belongs to the SecD/SecF family. SecF subfamily. In terms of assembly, forms a complex with SecD. Part of the essential Sec protein translocation apparatus which comprises SecA, SecYEG and auxiliary proteins SecDF. Other proteins may also be involved.

The protein localises to the cell membrane. In terms of biological role, part of the Sec protein translocase complex. Interacts with the SecYEG preprotein conducting channel. SecDF uses the proton motive force (PMF) to complete protein translocation after the ATP-dependent function of SecA. This Alicyclobacillus acidocaldarius subsp. acidocaldarius (strain ATCC 27009 / DSM 446 / BCRC 14685 / JCM 5260 / KCTC 1825 / NBRC 15652 / NCIMB 11725 / NRRL B-14509 / 104-IA) (Bacillus acidocaldarius) protein is Protein translocase subunit SecF.